Here is a 794-residue protein sequence, read N- to C-terminus: Inactive zinc metalloprotease C354.09c (794 aa).

The interval Met-1–Ser-56 is disordered. A helical transmembrane segment spans residues Ile-91–Tyr-111.

The protein belongs to the peptidase M28 family. M28B subfamily.

It is found in the membrane. The protein is Inactive zinc metalloprotease C354.09c of Schizosaccharomyces pombe (strain 972 / ATCC 24843) (Fission yeast).